A 396-amino-acid polypeptide reads, in one-letter code: MDCNMVSSFPWDWENLIMSNQSKTENEKKQQSTEWEFEKGEGIESIVPDFLGFEKVSSGSATSFWHTAVSKSSQSTSINSSSPEDKRCNLASQSSPGDSSSNIDFLQVKPSTALEVPIASAESDLCLKLGKRTYSEEFWGRNNNDLSAVSMNLLTPSVVARKKTKSCGQSMQVPRCQIDGCELDLSSSKDYHRKHRVCETHSKCPKVVVSGLERRFCQQCSRFHAVSEFDEKKRSCRKRLSHHNARRRKPQGVFPLNSERVFDRRQHTSMLWNGLSLNTRSEEKYTWGTTYETKPTQMESGFTLSFQRGNGSEDQLFTGSTLSFSAFQTSGGFSAGKSNIQLPDKGVGECSGGLHESHDFYSALSLLSTTSDSQGIKHTPVAEPPPIFGTFPSHFI.

The interval 74–104 (QSTSINSSSPEDKRCNLASQSSPGDSSSNID) is disordered. Positions 90-104 (LASQSSPGDSSSNID) are enriched in polar residues. An SBP-type zinc finger spans residues 173 to 250 (VPRCQIDGCE…SHHNARRRKP (78 aa)). Residues Cys176, Cys181, Cys198, His201, Cys217, Cys220, His224, and Cys236 each contribute to the Zn(2+) site. Residues 233–249 (KRSCRKRLSHHNARRRK) carry the Bipartite nuclear localization signal motif.

Zn(2+) is required as a cofactor.

The protein localises to the nucleus. Trans-acting factor that binds specifically to the consensus nucleotide sequence 5'-TNCGTACAA-3'. This chain is Squamosa promoter-binding-like protein 10 (SPL10), found in Arabidopsis thaliana (Mouse-ear cress).